The chain runs to 145 residues: 3-hydroxyacyl-[acyl-carrier-protein] dehydratase FabZ (145 aa).

The active site involves H50.

Belongs to the thioester dehydratase family. FabZ subfamily.

Its subcellular location is the cytoplasm. It carries out the reaction a (3R)-hydroxyacyl-[ACP] = a (2E)-enoyl-[ACP] + H2O. In terms of biological role, involved in unsaturated fatty acids biosynthesis. Catalyzes the dehydration of short chain beta-hydroxyacyl-ACPs and long chain saturated and unsaturated beta-hydroxyacyl-ACPs. The chain is 3-hydroxyacyl-[acyl-carrier-protein] dehydratase FabZ from Coxiella burnetii (strain CbuK_Q154) (Coxiella burnetii (strain Q154)).